A 393-amino-acid chain; its full sequence is Xylose transport system permease protein XylH (393 aa).

At 1 to 24 (MSKSNPSEVKLAVPTSGGFSGLKS) the chain is on the periplasmic side. Residues 25 to 45 (LNLQVFVMIAAIIAIMLFFTW) form a helical membrane-spanning segment. Over 46-64 (TTDGAYLSARNVSNLLRQT) the chain is Cytoplasmic. The helical transmembrane segment at 65–85 (AITGILAVGMVFVIISAEIDL) threads the bilayer. At 86–102 (SVGSMMGLLGGVAAICD) the chain is on the periplasmic side. A helical transmembrane segment spans residues 103-123 (VWLGWPLPLTIIVTLVLGLLL). Over 124-135 (GAWNGWWVAYRK) the chain is Cytoplasmic. The chain crosses the membrane as a helical span at residues 136-156 (VPSFIVTLAGMLAFRGILIGI). Residues 157–175 (TNGTTVSPTSAAMSQIGQS) lie on the Periplasmic side of the membrane. The chain crosses the membrane as a helical span at residues 176 to 196 (YLPASTGFIIGALGLMAFVGW). At 197 to 214 (QWRGRMRRQALGLQSPAS) the chain is on the cytoplasmic side. A helical transmembrane segment spans residues 215-235 (TAVVGRQALTAIIVLGAIWLL). At 236-239 (NDYR) the chain is on the periplasmic side. The chain crosses the membrane as a helical span at residues 240 to 260 (GVPTPVLLLTLLLLGGMFMAT). Topologically, residues 261 to 287 (RTAFGRRIYAIGGNLEAARLSGINVER) are cytoplasmic. Residues 288–308 (TKLAVFAINGLMVAIAGLILS) form a helical membrane-spanning segment. Over 309–312 (SRLG) the chain is Periplasmic. A helical transmembrane segment spans residues 313–333 (AGSPSAGNIAELDAIAACVIG). The Cytoplasmic segment spans residues 334–336 (GTS). The chain crosses the membrane as a helical span at residues 337–357 (LAGGVGSVAGAVMGAFIMASL). The Periplasmic segment spans residues 358-365 (DNGMSMMD). A helical membrane pass occupies residues 366–386 (VPTFWQYIVKGAILLLAVWMD). Residues 387 to 393 (SATKRRS) lie on the Cytoplasmic side of the membrane.

Belongs to the binding-protein-dependent transport system permease family. AraH/RbsC subfamily.

The protein localises to the cell inner membrane. Part of the binding-protein-dependent transport system for D-xylose. Probably responsible for the translocation of the substrate across the membrane. The polypeptide is Xylose transport system permease protein XylH (xylH) (Escherichia coli O6:H1 (strain CFT073 / ATCC 700928 / UPEC)).